A 985-amino-acid polypeptide reads, in one-letter code: MAIWEQLEVSKAHVAYACVGVFSSIFSLVSLYVKEKLYIGESTVAGIFGLIVGPVCLNWFNPLKWGNSDSITLEITRIVLCLQIFAVAVELPRKYMLKHWVSVTMLLLPVMTAGWLIIGLFVWILIPGLNFSASLLISACITATDPILAQSVVSGKFAQRVPGHLRNLLSAESGCNDGMAFPFLFLSMNLILHPGNGREIVKDWICVTILYECLFGCLLGCFIGYVGRITIRFAEKKNIIDRESFLAFYVVLAFMCAGFGSILGVDDLLVSFAAGATFAWDGWFSQKTQESNVSTVIDLLLNYAYFIYFGAIIPWSQFNNGEIGTNVWRLIILSIVVIFLRRIPAVMILRPLIPDIKSWREALFVGHFGPIGVGAIFAAILARGELESTFSDEPTPLNVVPSKEESKHWQLIACIWPITCFFIVTSIIVHGSSVAIITLGRHLNTITLTKTFTTHTTNGDNGKSSWMQRLPSLDKAGRSFSLHRMDTQMTLSGDEGEAEEGGGRKGLAGGEDEEGLNNDQIGSVATSGIPARPAGGMPRRRKLSRKEKRLNRRQKLRNKGREIFSSRSKNEMYDDDELNDLGRERLQKEKEARAATFALSTAVNTQRNEEIGMGGDEEEDEYTPEKEYSDNYNNTPSFESSERSSSLRGRTYVPRNRYDGEETESEIESEDEMENESERSMASSEERRIRKMKEEEMKPGTAYLDGNRMIIENKQGEILNQVDIEDRNEARDDEVSVDSTAHSSLTTTMTNLSSSSGGRLKRILTPTSLGKIHSLVDKGKDKNKNSKYHAFKIDNLLIIENEDGDVIKRYKINPHKSDDDKSKNRPRNDSVVSRALTAVGLKSKANSGVPPPVDEEKAIEGPSRKGPGMLKKRTLTPAPPRGVQDSLDLEDEPSSEEDLGDSYNMDDSEDYDDNAYESETEFERQRRLNALGEMTAPADQDDEELPPLPVEAQTGNDGPGTAEGKKKQKSAAVKSALSKTLGLNK.

At 1–12 (MAIWEQLEVSKA) the chain is on the cytoplasmic side. A helical transmembrane segment spans residues 13 to 33 (HVAYACVGVFSSIFSLVSLYV). At 34-36 (KEK) the chain is on the extracellular side. Residues 37–57 (LYIGESTVAGIFGLIVGPVCL) traverse the membrane as a helical segment. The Cytoplasmic segment spans residues 58 to 70 (NWFNPLKWGNSDS). The helical transmembrane segment at 71–91 (ITLEITRIVLCLQIFAVAVEL) threads the bilayer. Residues 92-105 (PRKYMLKHWVSVTM) lie on the Extracellular side of the membrane. Residues 106–126 (LLLPVMTAGWLIIGLFVWILI) form a helical membrane-spanning segment. Topologically, residues 127–128 (PG) are cytoplasmic. Residues 129–149 (LNFSASLLISACITATDPILA) traverse the membrane as a helical segment. Over 150–176 (QSVVSGKFAQRVPGHLRNLLSAESGCN) the chain is Extracellular. The chain crosses the membrane as a helical span at residues 177–197 (DGMAFPFLFLSMNLILHPGNG). The Cytoplasmic portion of the chain corresponds to 198–203 (REIVKD). Residues 204–224 (WICVTILYECLFGCLLGCFIG) traverse the membrane as a helical segment. Residues 225–244 (YVGRITIRFAEKKNIIDRES) lie on the Extracellular side of the membrane. The chain crosses the membrane as a helical span at residues 245–265 (FLAFYVVLAFMCAGFGSILGV). The Cytoplasmic portion of the chain corresponds to 266–294 (DDLLVSFAAGATFAWDGWFSQKTQESNVS). The chain crosses the membrane as a helical span at residues 295–315 (TVIDLLLNYAYFIYFGAIIPW). Over 316–319 (SQFN) the chain is Extracellular. The helical transmembrane segment at 320-340 (NGEIGTNVWRLIILSIVVIFL) threads the bilayer. Topologically, residues 341-361 (RRIPAVMILRPLIPDIKSWRE) are cytoplasmic. The helical transmembrane segment at 362–382 (ALFVGHFGPIGVGAIFAAILA) threads the bilayer. The Extracellular segment spans residues 383–410 (RGELESTFSDEPTPLNVVPSKEESKHWQ). The chain crosses the membrane as a helical span at residues 411-431 (LIACIWPITCFFIVTSIIVHG). Topologically, residues 432–985 (SSVAIITLGR…ALSKTLGLNK (554 aa)) are cytoplasmic. Disordered stretches follow at residues 489–701 (MTLS…KPGT) and 726–760 (DRNEARDDEVSVDSTAHSSLTTTMTNLSSSSGGRL). Polar residues predominate over residues 517-526 (NNDQIGSVAT). A compositionally biased stretch (basic residues) spans 538–558 (PRRRKLSRKEKRLNRRQKLRN). Basic and acidic residues-rich tracts occupy residues 559–572 (KGREIFSSRSKNEM) and 580–593 (DLGRERLQKEKEAR). A Phosphoserine modification is found at serine 568. Over residues 637-646 (SFESSERSSS) the composition is skewed to low complexity. Residues 661–675 (EETESEIESEDEMEN) are compositionally biased toward acidic residues. Residues 676 to 698 (ESERSMASSEERRIRKMKEEEMK) show a composition bias toward basic and acidic residues. A compositionally biased stretch (low complexity) spans 743-756 (SSLTTTMTNLSSSS). Threonine 765 is modified (phosphothreonine). A phosphoserine mark is found at serine 768 and serine 774. The segment at 812–985 (INPHKSDDDK…ALSKTLGLNK (174 aa)) is disordered. Composition is skewed to basic and acidic residues over residues 815-828 (HKSDDDKSKNRPRN) and 854-863 (DEEKAIEGPS). Residues 887 to 920 (LDLEDEPSSEEDLGDSYNMDDSEDYDDNAYESET) are compositionally biased toward acidic residues. Residues 970-979 (SAAVKSALSK) show a composition bias toward low complexity.

This sequence belongs to the fungal Na(+)/H(+) exchanger family.

Its subcellular location is the cell membrane. Sodium export from cell, takes up external protons in exchange for internal sodium ions. Also capable of exporting potassium ions. In Saccharomyces cerevisiae (strain ATCC 204508 / S288c) (Baker's yeast), this protein is Na(+)/H(+) antiporter (NHA1).